Here is a 474-residue protein sequence, read N- to C-terminus: Glutamate--tRNA ligase (474 aa).

A 'HIGH' region motif is present at residues 9–19; sequence PSPTGLLHMGG. The 'KMSKS' region signature appears at 238–242; it reads KLSKR. Residue K241 coordinates ATP.

This sequence belongs to the class-I aminoacyl-tRNA synthetase family. Glutamate--tRNA ligase type 1 subfamily. Monomer.

Its subcellular location is the cytoplasm. It catalyses the reaction tRNA(Glu) + L-glutamate + ATP = L-glutamyl-tRNA(Glu) + AMP + diphosphate. Functionally, catalyzes the attachment of glutamate to tRNA(Glu) in a two-step reaction: glutamate is first activated by ATP to form Glu-AMP and then transferred to the acceptor end of tRNA(Glu). In Buchnera aphidicola subsp. Cinara cedri (strain Cc), this protein is Glutamate--tRNA ligase.